A 467-amino-acid polypeptide reads, in one-letter code: Protein CitXG (467 aa).

Positions Met1–Ser178 are apo-citrate lyase phosphoribosyl-dephospho-CoA transferase. The segment at Lys179–Leu467 is 2-(5''-triphosphoribosyl)-3'-dephosphocoenzyme-A synthase.

This sequence in the N-terminal section; belongs to the CitX family. In the C-terminal section; belongs to the CitG/MdcB family.

The catalysed reaction is apo-[citrate lyase ACP] + 2'-(5''-triphospho-alpha-D-ribosyl)-3'-dephospho-CoA = holo-[citrate lyase ACP] + diphosphate. It carries out the reaction 3'-dephospho-CoA + ATP = 2'-(5''-triphospho-alpha-D-ribosyl)-3'-dephospho-CoA + adenine. Bifunctional enzyme that catalyzes formation of 2-(5''-triphosphoribosyl)-3'-dephosphocoenzyme-A, and then the transfer of this prosthetic group precursor to the apo-acyl carrier protein (gamma chain) of the citrate lyase to yield the holo-acyl carrier protein. The sequence is that of Protein CitXG (citXG) from Leuconostoc mesenteroides subsp. cremoris.